The primary structure comprises 272 residues: MIGRVYQVISGFYDIKCEDKFYRVRAIGNLRNLKLNPVVGDLVVFDESLTKIEPRKNILIRPKVANIDQAIIVISLDQPKFSSFLLDKFLSIIEFQKIKVVIIFTKADLNTKEDIGYYLKTYQSYLTSLDDENSYKKLNDIFEKKISVLVGQSGVGKTTILNKVSLNNFFTQNISKALGRGKHSTRVVKMIDFNNGQIIDTPGFSSIEIQMSQKDLSKSFESFDKYSQRCKYRHCLHQNERLEDCNIKQLVQSQEIPLFRYNNYLKLLDEVK.

The 152-residue stretch at 56–207 folds into the CP-type G domain; it reads KNILIRPKVA…IIDTPGFSSI (152 aa). GTP contacts are provided by residues 105 to 108 and 151 to 159; these read TKAD and GQSGVGKTT. Residues Cys230, Cys235, His237, and Cys245 each coordinate Zn(2+).

This sequence belongs to the TRAFAC class YlqF/YawG GTPase family. RsgA subfamily. In terms of assembly, monomer. Associates with 30S ribosomal subunit, binds 16S rRNA. Zn(2+) is required as a cofactor.

The protein localises to the cytoplasm. One of several proteins that assist in the late maturation steps of the functional core of the 30S ribosomal subunit. Helps release RbfA from mature subunits. May play a role in the assembly of ribosomal proteins into the subunit. Circularly permuted GTPase that catalyzes slow GTP hydrolysis, GTPase activity is stimulated by the 30S ribosomal subunit. The chain is Small ribosomal subunit biogenesis GTPase RsgA from Mycoplasmopsis pulmonis (strain UAB CTIP) (Mycoplasma pulmonis).